We begin with the raw amino-acid sequence, 116 residues long: Ferredoxin-like protein in nif region (116 aa).

One can recognise a 4Fe-4S ferredoxin-type domain in the interval 2-29 (AYTITSQCISCKLCSSVCPTGAIKIAEN). Residues C9, C12, C15, and C19 each coordinate iron-sulfur cluster.

In Nostoc sp. (strain PCC 7120 / SAG 25.82 / UTEX 2576), this protein is Ferredoxin-like protein in nif region (fdxN).